Consider the following 65-residue polypeptide: Large ribosomal subunit protein bL33 (65 aa).

The segment at 17–40 is disordered; the sequence is SRSVPSSEKRSAGVSRYTTEKNRR.

The protein belongs to the bacterial ribosomal protein bL33 family.

The chain is Large ribosomal subunit protein bL33 from Prochlorococcus marinus (strain NATL1A).